The sequence spans 343 residues: Isopentenyl-diphosphate delta-isomerase (343 aa).

9 to 10 (RK) is a substrate binding site. Residues serine 67, 68 to 70 (AMT), serine 98, and asparagine 127 contribute to the FMN site. 98–100 (SQR) is a binding site for substrate. Position 162 (glutamine 162) interacts with substrate. A Mg(2+)-binding site is contributed by glutamate 163. FMN is bound by residues lysine 194, threonine 224, 273-275 (GVR), and 294-295 (AA).

Belongs to the IPP isomerase type 2 family. As to quaternary structure, homooctamer. Dimer of tetramers. It depends on FMN as a cofactor. NADPH serves as cofactor. The cofactor is Mg(2+).

It is found in the cytoplasm. It catalyses the reaction isopentenyl diphosphate = dimethylallyl diphosphate. Involved in the biosynthesis of isoprenoids. Catalyzes the 1,3-allylic rearrangement of the homoallylic substrate isopentenyl (IPP) to its allylic isomer, dimethylallyl diphosphate (DMAPP). The sequence is that of Isopentenyl-diphosphate delta-isomerase from Xanthobacter autotrophicus (strain ATCC BAA-1158 / Py2).